The chain runs to 120 residues: ATP-dependent Clp protease adapter protein ClpS (120 aa).

This sequence belongs to the ClpS family. Binds to the N-terminal domain of the chaperone ClpA.

Involved in the modulation of the specificity of the ClpAP-mediated ATP-dependent protein degradation. This is ATP-dependent Clp protease adapter protein ClpS from Pseudomonas fluorescens (strain ATCC BAA-477 / NRRL B-23932 / Pf-5).